Here is a 161-residue protein sequence, read N- to C-terminus: Transcriptional repressor NrdR (161 aa).

Residues 3 to 34 (CPYCGARDARVIDSRELNGGESIRRRRECIAC) fold into a zinc finger. The region spanning 49–139 (LMVVKRDGRR…VYRRFADLED (91 aa)) is the ATP-cone domain.

Belongs to the NrdR family. The cofactor is Zn(2+).

Its function is as follows. Negatively regulates transcription of bacterial ribonucleotide reductase nrd genes and operons by binding to NrdR-boxes. The chain is Transcriptional repressor NrdR from Thermomicrobium roseum (strain ATCC 27502 / DSM 5159 / P-2).